Here is a 228-residue protein sequence, read N- to C-terminus: 5'-methylthioadenosine/S-adenosylhomocysteine nucleosidase (228 aa).

E11 serves as the catalytic Proton acceptor. Substrate is bound by residues G77, I151, and 172-173 (ME). D196 acts as the Proton donor in catalysis.

It belongs to the PNP/UDP phosphorylase family. MtnN subfamily.

The catalysed reaction is S-adenosyl-L-homocysteine + H2O = S-(5-deoxy-D-ribos-5-yl)-L-homocysteine + adenine. It catalyses the reaction S-methyl-5'-thioadenosine + H2O = 5-(methylsulfanyl)-D-ribose + adenine. It carries out the reaction 5'-deoxyadenosine + H2O = 5-deoxy-D-ribose + adenine. The protein operates within amino-acid biosynthesis; L-methionine biosynthesis via salvage pathway; S-methyl-5-thio-alpha-D-ribose 1-phosphate from S-methyl-5'-thioadenosine (hydrolase route): step 1/2. Its function is as follows. Catalyzes the irreversible cleavage of the glycosidic bond in both 5'-methylthioadenosine (MTA) and S-adenosylhomocysteine (SAH/AdoHcy) to adenine and the corresponding thioribose, 5'-methylthioribose and S-ribosylhomocysteine, respectively. Also cleaves 5'-deoxyadenosine, a toxic by-product of radical S-adenosylmethionine (SAM) enzymes, into 5-deoxyribose and adenine. This Staphylococcus haemolyticus (strain JCSC1435) protein is 5'-methylthioadenosine/S-adenosylhomocysteine nucleosidase.